A 1392-amino-acid chain; its full sequence is DNA-directed RNA polymerase subunit beta (1392 aa).

Belongs to the RNA polymerase beta chain family. The RNAP catalytic core consists of 2 alpha, 1 beta, 1 beta' and 1 omega subunit. When a sigma factor is associated with the core the holoenzyme is formed, which can initiate transcription.

It carries out the reaction RNA(n) + a ribonucleoside 5'-triphosphate = RNA(n+1) + diphosphate. DNA-dependent RNA polymerase catalyzes the transcription of DNA into RNA using the four ribonucleoside triphosphates as substrates. The sequence is that of DNA-directed RNA polymerase subunit beta from Neisseria gonorrhoeae (strain NCCP11945).